We begin with the raw amino-acid sequence, 271 residues long: Putative phosphoenolpyruvate synthase regulatory protein (271 aa).

Residue 152-159 coordinates ADP; it reads GASRSGKT.

This sequence belongs to the pyruvate, phosphate/water dikinase regulatory protein family. PSRP subfamily.

The catalysed reaction is [pyruvate, water dikinase] + ADP = [pyruvate, water dikinase]-phosphate + AMP + H(+). It catalyses the reaction [pyruvate, water dikinase]-phosphate + phosphate + H(+) = [pyruvate, water dikinase] + diphosphate. In terms of biological role, bifunctional serine/threonine kinase and phosphorylase involved in the regulation of the phosphoenolpyruvate synthase (PEPS) by catalyzing its phosphorylation/dephosphorylation. The sequence is that of Putative phosphoenolpyruvate synthase regulatory protein from Marinobacter nauticus (strain ATCC 700491 / DSM 11845 / VT8) (Marinobacter aquaeolei).